The primary structure comprises 497 residues: Transmembrane protein 104 (497 aa).

Over 1-10 the chain is Cytoplasmic; the sequence is MAGGITDTGE. Residues 11-31 traverse the membrane as a helical segment; that stretch reads LYSPYVGLVYMFNLIVGTGAL. Residues 32–35 lie on the Extracellular side of the membrane; that stretch reads TMPK. The chain crosses the membrane as a helical span at residues 36-56; the sequence is AFATAGWLVSLVLLMFLGFMS. Residues 57–148 lie on the Cytoplasmic side of the membrane; sequence YMTTTFVVEA…SMFFNKVGVN (92 aa). Residues 149-169 form a helical membrane-spanning segment; it reads LFYFCIIIYLYGDLAIYAAAV. Topologically, residues 170–205 are extracellular; the sequence is PVSLMQVTCAIGNHSCNVGDGTKYNDTDKCWGPIRR. Residue asparagine 194 is glycosylated (N-linked (GlcNAc...) asparagine). The chain crosses the membrane as a helical span at residues 206-226; it reads IDAYRLYLAAFTLLLGPFTFF. Residues 227 to 234 lie on the Cytoplasmic side of the membrane; it reads NVQKTKYL. Residues 235 to 255 traverse the membrane as a helical segment; that stretch reads QIMTSLMRWIAFILMIILALI. Over 256–277 the chain is Extracellular; it reads RISRGQAEGHPSMAQLSGIRNL. The chain crosses the membrane as a helical span at residues 278–298; it reads FGVCVYSFMCQHSLPSLITPI. Residues 299–306 lie on the Cytoplasmic side of the membrane; the sequence is SKKRHVNK. A helical transmembrane segment spans residues 307 to 327; sequence LVLLDYILILAFYSLLSFTAI. Residues 328 to 356 lie on the Extracellular side of the membrane; sequence YCFRNDTLMDMYTLNFTNCEIINVAFIRY. Residues 357 to 377 traverse the membrane as a helical segment; that stretch reads FLGLFPVFTISTNFPIIAVTL. Over 378 to 398 the chain is Cytoplasmic; the sequence is RNNWKTLFHREGGTYPWLVDR. A helical transmembrane segment spans residues 399–419; the sequence is IVFPAITLVPPVLVVFCTHDL. At 420–421 the chain is on the extracellular side; that stretch reads ES. The helical transmembrane segment at 422–442 threads the bilayer; it reads LVGITGAYAGNGIQYLIPAFL. Residues 443–471 lie on the Cytoplasmic side of the membrane; the sequence is AYCSRKDTQLVFGSGTVNKHLSPFRHTFW. The helical transmembrane segment at 472–492 threads the bilayer; sequence IVFVLIWGFSCFVFVTANIVL. At 493-497 the chain is on the extracellular side; that stretch reads SESKL.

The protein belongs to the TMEM104 family.

Its subcellular location is the membrane. The sequence is that of Transmembrane protein 104 (TMEM104) from Gallus gallus (Chicken).